Reading from the N-terminus, the 205-residue chain is MAIKIGITGGIGSGKSVVSHLLEVMGVPVYISDEESKKVVATDPVIRKELCDLVGEEVFFGGKLNKTLLATYLFASSTHASQVNGIIHPRVKEHFRQWSSHKDCLDIIGMESAILIESGFADEVDCIVMVYAPLELRVERAVRRDNASCEQIMQRIRSQMSDEEKCERASFVIINDGEKPLIPQILELIAFLYQKIHYLCSAKNN.

A DPCK domain is found at 4–203 (KIGITGGIGS…QKIHYLCSAK (200 aa)). 12–17 (GSGKSV) contacts ATP.

The protein belongs to the CoaE family.

The protein resides in the cytoplasm. It catalyses the reaction 3'-dephospho-CoA + ATP = ADP + CoA + H(+). It functions in the pathway cofactor biosynthesis; coenzyme A biosynthesis; CoA from (R)-pantothenate: step 5/5. Functionally, catalyzes the phosphorylation of the 3'-hydroxyl group of dephosphocoenzyme A to form coenzyme A. In Bacteroides fragilis (strain ATCC 25285 / DSM 2151 / CCUG 4856 / JCM 11019 / LMG 10263 / NCTC 9343 / Onslow / VPI 2553 / EN-2), this protein is Dephospho-CoA kinase.